The following is a 907-amino-acid chain: MAGELVSFGIKKLWDLLSQECEQFQGVEDQVTGLKRDLNLLSSFLKDADAKKHTTAVVRNVVEEIKEIVYDAEDIIETYLLKEKLWKTSGIKMRIRRHACIISDRRRNALDVGGIRTRISDVIRDMQSFGVQQAIVDGGYMQPQGDRQREMRQTFSKDYESDFVGLEVNVKKLVGYLVDEENVQVVSITGMGGLGKTTLARQVFNHEDVKHQFDRLAWVCVSQEFTRKNVWQMILQNLTSREKKDEILQMEEAELHDKLFQLLETSKSLIVFDDIWKDEDWDLIKPIFPPNKGWKVLLTSQNESVAVRGDIKYLNFKPECLAIEDSWTLFQRIAFPKKDASESKVDEEMEDMGKQMLKHCGGLPLAIKVLGGLLAAKYTMHDWERLSVNIGSDIVGRTSSNNSSIYHVLSMSFEELPSYLKHCFLYLAHFPEDHKINVEKLSYCWAAEGISTAEDYHNGETIQDVGQSYLEELVRRNMIIWERDATASRFGTCHLHDMMREVCLFKAKEENFLQIAVKSVGVTSSSTGNSQSPCRSRRLVYQCPTTLHVERDINNPKLRSLVVLWHDLWVENWKLLGTSFTRLKLLRVLDLFYVDFEGMKLPFGIGNLIHLRYLSLQDAKVSHLPSSLGNLMLLIYLNLDVDTEFIFVPDVFMRMHELRYLKLPLHMHKKTRLSLRNLVKLETLVYFSTWHSSSKDLCGMTRLMTLAIRLTRVTSTETLSASISGLRNLEYLYIVGTHSKKMREEGIVLDFIHLKHLLLDLYMPRQQHFPSRLTFVKLSECGLEEDPMPILEKLLHLKGVILLKGSYCGRRMVCSGGGFPQLKKLEIVGLNKWEEWLVEEGSMPLLETLSILDCEELKEIPDGLRFIYSLELVMLGTRWKKKFSVGGEDYYKVQHIPSVEFIGGYLK.

Positions 144–456 (QGDRQREMRQ…AEGISTAEDY (313 aa)) constitute an NB-ARC domain. ATP is bound at residue 190-197 (GMGGLGKT). LRR repeat units follow at residues 608 to 631 (LIHLRYLSLQDAKVSHLPSSLGNL) and 843 to 868 (MPLLETLSILDCEELKEIPDGLRFIY).

This sequence belongs to the disease resistance NB-LRR family.

Possible disease resistance protein. In Arabidopsis thaliana (Mouse-ear cress), this protein is Probable disease resistance protein At1g58390.